We begin with the raw amino-acid sequence, 1846 residues long: Peripheral-type benzodiazepine receptor-associated protein 1 (1846 aa).

Disordered regions lie at residues 57-97 (EESS…GYSC), 281-318 (NQREPLRPARSPGPTAPSRVGAPAPGAPGEAVLQDDVE), and 560-628 (GPKD…SEVE). Over residues 576–587 (PKSSEPALTTLT) the composition is skewed to polar residues. Over residues 599–612 (SLSNSSRSESIHNS) the composition is skewed to low complexity. The 68-residue stretch at 649 to 716 (ARIQVFLARY…PSNFVERVSD (68 aa)) folds into the SH3 1 domain. Residues 726 to 785 (ELADSSHSSGPELSFLSGGGGGCSSGGQSSGGRSQPRPEEEAAGDELSLSPPPEGLGEPL) are disordered. The span at 742-755 (SGGGGGCSSGGQSS) shows a compositional bias: gly residues. Fibronectin type-III domains are found at residues 787 to 878 (VPYP…AGAG), 880 to 972 (VPSQ…TLPA), and 977 to 1075 (APLD…PALA). Disordered regions lie at residues 1084–1107 (SCLSPRPSPEVRTPLASVSPGLGD), 1163–1219 (EPTL…LDSG), 1243–1302 (HSRN…SDEE), 1322–1476 (SIPE…PESS), 1492–1617 (YDSE…QDLP), 1704–1755 (LTEA…AAQK), and 1812–1846 (VPSNFLEGPGPESGSLESGTSQAESQRTRRRRVQC). The segment covering 1202-1219 (TQKKPSIEACHGGDLDSG) has biased composition (basic and acidic residues). Residues 1251–1265 (DIQEEEEEEEEEEEE) are compositionally biased toward acidic residues. Residues 1270–1283 (PCSSQKQVAGNSIR) are compositionally biased toward polar residues. Residues 1324 to 1335 (PEEEEEEEEEEG) are compositionally biased toward acidic residues. Composition is skewed to basic and acidic residues over residues 1411 to 1420 (RPQDPREHCS) and 1545 to 1577 (AWEKGEPERRGRSAIGRTKEPPSRATETGESRG). Positions 1616–1684 (LPVRVFVALF…PCNMVAEVAV (69 aa)) constitute an SH3 2 domain. Over residues 1705–1719 (TEASGNGPSVYSSAH) the composition is skewed to polar residues. Residues 1755 to 1822 (KTSRPMVAAF…PSNFLEGPGP (68 aa)) form the SH3 3 domain. The span at 1817 to 1830 (LEGPGPESGSLESG) shows a compositional bias: low complexity.

Belongs to the RIMBP family. Interacts with RIMS1 and RIMS2. Interacts with TSPO. Interacts with CACNA1A. Predominantly expressed in the brain.

The protein localises to the cytoplasm. It localises to the mitochondrion. Functionally, required for synaptic transmission regulation. It probably controls the recruitement of voltage-gated calcium channels to the presynaptic membrane, and modulates neurotransmitter release. In Mus musculus (Mouse), this protein is Peripheral-type benzodiazepine receptor-associated protein 1.